We begin with the raw amino-acid sequence, 350 residues long: S-adenosylmethionine:tRNA ribosyltransferase-isomerase (350 aa).

It belongs to the QueA family. Monomer.

It is found in the cytoplasm. The enzyme catalyses 7-aminomethyl-7-carbaguanosine(34) in tRNA + S-adenosyl-L-methionine = epoxyqueuosine(34) in tRNA + adenine + L-methionine + 2 H(+). It functions in the pathway tRNA modification; tRNA-queuosine biosynthesis. Its function is as follows. Transfers and isomerizes the ribose moiety from AdoMet to the 7-aminomethyl group of 7-deazaguanine (preQ1-tRNA) to give epoxyqueuosine (oQ-tRNA). The chain is S-adenosylmethionine:tRNA ribosyltransferase-isomerase from Aliivibrio salmonicida (strain LFI1238) (Vibrio salmonicida (strain LFI1238)).